The following is a 428-amino-acid chain: Glucose-1-phosphate adenylyltransferase (428 aa).

Residues Tyr114, Gly179, 194–195, and Ser212 contribute to the alpha-D-glucose 1-phosphate site; that span reads EK.

It belongs to the bacterial/plant glucose-1-phosphate adenylyltransferase family. As to quaternary structure, homotetramer.

It catalyses the reaction alpha-D-glucose 1-phosphate + ATP + H(+) = ADP-alpha-D-glucose + diphosphate. Its pathway is glycan biosynthesis; glycogen biosynthesis. Functionally, involved in the biosynthesis of ADP-glucose, a building block required for the elongation reactions to produce glycogen. Catalyzes the reaction between ATP and alpha-D-glucose 1-phosphate (G1P) to produce pyrophosphate and ADP-Glc. The sequence is that of Glucose-1-phosphate adenylyltransferase from Yersinia pseudotuberculosis serotype IB (strain PB1/+).